The primary structure comprises 501 residues: Dipeptide and tripeptide permease B (501 aa).

The Cytoplasmic portion of the chain corresponds to 1–27 (MRPSAPTGLLQQPKPFFMIFFVELWER). A helical membrane pass occupies residues 28 to 48 (FGYYGVQGILAVFFVQQLGFS). The Periplasmic segment spans residues 49 to 52 (QEQS). The chain crosses the membrane as a helical span at residues 53–73 (FITFGAFSALVYGLISVGGYV). Residues 74 to 82 (GDHVLGTKR) are Cytoplasmic-facing. The helical transmembrane segment at 83-103 (TMVLGAIVLVIGYFMTGMSIY) threads the bilayer. Residues 104–106 (NPD) lie on the Periplasmic side of the membrane. Residues 107-127 (LIFYALGTIAVGNCLFKANPA) traverse the membrane as a helical segment. Residues 128–146 (SLLAKCYERGDPRLDGAFT) lie on the Cytoplasmic side of the membrane. A helical transmembrane segment spans residues 147-167 (LFYMSINIGSLISLSLAPVIA). The Periplasmic portion of the chain corresponds to 168–172 (DHYGY). A helical transmembrane segment spans residues 173–193 (TVTYNLCGVGLVIALLTFFAC). Residues 194-211 (RHMVRDIGSEPDHLPLDY) are Cytoplasmic-facing. A helical transmembrane segment spans residues 212–232 (GKLLLVLLGSVALVFFCAWLM). A topological domain (periplasmic) is located at residue histidine 233. A helical transmembrane segment spans residues 234-254 (HVVIANMVLMTVTLAVVIFFF). The Cytoplasmic portion of the chain corresponds to 255 to 267 (REAFKLDAVARNK). The helical transmembrane segment at 268-288 (MYVAFVLMLEAVVFYVLYAQM) threads the bilayer. Residues 289 to 311 (PTSLNFFAINNMHHEMLGMSVNP) lie on the Periplasmic side of the membrane. A helical membrane pass occupies residues 312 to 332 (ISFQALNPFWVVVGSPVLAMI). The Cytoplasmic segment spans residues 333 to 350 (YTRLGSKGRDLTMPLKFT). The chain crosses the membrane as a helical span at residues 351–371 (LGMLFCSLGFLTAAASGIWFA). The Periplasmic portion of the chain corresponds to 372–380 (DAQGLTSPW). A helical transmembrane segment spans residues 381 to 401 (FMVLIYLFQSLGELMISALGL). The Cytoplasmic portion of the chain corresponds to 402–411 (AMVAALVPQR). The chain crosses the membrane as a helical span at residues 412-432 (LMGFILGMWFLTQAMASLLGG). The Periplasmic segment spans residues 433-456 (YVATFTAVPQGVTDPLQTLPIYTD). The chain crosses the membrane as a helical span at residues 457–477 (VFGKIGLVTLLVAVVMALMVP). The Cytoplasmic portion of the chain corresponds to 478–501 (WLNRMMHAGQGEEGEDLLSQQAKA).

Belongs to the major facilitator superfamily. Proton-dependent oligopeptide transporter (POT/PTR) (TC 2.A.17) family. DtpB subfamily.

It is found in the cell inner membrane. Functionally, proton-dependent permease that transports di- and tripeptides. The protein is Dipeptide and tripeptide permease B of Aeromonas hydrophila subsp. hydrophila (strain ATCC 7966 / DSM 30187 / BCRC 13018 / CCUG 14551 / JCM 1027 / KCTC 2358 / NCIMB 9240 / NCTC 8049).